Consider the following 37-residue polypeptide: Lambda-hexatoxin-Hf1a (37 aa).

4 disulfides stabilise this stretch: Cys4–Cys18, Cys11–Cys23, Cys14–Cys15, and Cys17–Cys34.

It belongs to the neurotoxin 11 (kappa toxin) family. Expressed by the venom gland.

Its subcellular location is the secreted. Functionally, this excitatory toxin inhibits insect calcium-activated potassium (KCa) channels (Slo-type). This Hadronyche formidabilis (Northern tree funnel-web spider) protein is Lambda-hexatoxin-Hf1a.